The primary structure comprises 139 residues: Peptide methionine sulfoxide reductase MsrB (139 aa).

Positions 17 to 139 (EEQWRRELSP…NSAALKLEPK (123 aa)) constitute a MsrB domain. Residues Cys-56, Cys-59, Cys-105, and Cys-108 each contribute to the Zn(2+) site. The active-site Nucleophile is Cys-128.

The protein belongs to the MsrB Met sulfoxide reductase family. Zn(2+) serves as cofactor.

It carries out the reaction L-methionyl-[protein] + [thioredoxin]-disulfide + H2O = L-methionyl-(R)-S-oxide-[protein] + [thioredoxin]-dithiol. This Bradyrhizobium diazoefficiens (strain JCM 10833 / BCRC 13528 / IAM 13628 / NBRC 14792 / USDA 110) protein is Peptide methionine sulfoxide reductase MsrB.